Here is a 644-residue protein sequence, read N- to C-terminus: Acetyl-coenzyme A synthetase (644 aa).

CoA is bound by residues 189–192 and Thr-307; that span reads RGGK. Residues 383 to 385, 407 to 412, Asp-496, and Arg-511 each bind ATP; these read GEP and DTWWQT. Position 519 (Ser-519) interacts with CoA. Arg-522 contacts ATP. Mg(2+)-binding residues include Val-533, His-535, and Val-538. Arg-580 lines the CoA pocket. Lys-605 is subject to N6-acetyllysine.

Belongs to the ATP-dependent AMP-binding enzyme family. Mg(2+) serves as cofactor. Acetylated. Deacetylation by the SIR2-homolog deacetylase activates the enzyme.

The enzyme catalyses acetate + ATP + CoA = acetyl-CoA + AMP + diphosphate. Its function is as follows. Catalyzes the conversion of acetate into acetyl-CoA (AcCoA), an essential intermediate at the junction of anabolic and catabolic pathways. AcsA undergoes a two-step reaction. In the first half reaction, AcsA combines acetate with ATP to form acetyl-adenylate (AcAMP) intermediate. In the second half reaction, it can then transfer the acetyl group from AcAMP to the sulfhydryl group of CoA, forming the product AcCoA. The chain is Acetyl-coenzyme A synthetase from Rubrobacter xylanophilus (strain DSM 9941 / JCM 11954 / NBRC 16129 / PRD-1).